A 299-amino-acid chain; its full sequence is Coenzyme PQQ synthesis protein B (299 aa).

Belongs to the PqqB family.

It functions in the pathway cofactor biosynthesis; pyrroloquinoline quinone biosynthesis. Its function is as follows. May be involved in the transport of PQQ or its precursor to the periplasm. The chain is Coenzyme PQQ synthesis protein B from Methylorubrum extorquens (strain ATCC 14718 / DSM 1338 / JCM 2805 / NCIMB 9133 / AM1) (Methylobacterium extorquens).